A 579-amino-acid chain; its full sequence is Proline--tRNA ligase (579 aa).

It belongs to the class-II aminoacyl-tRNA synthetase family. ProS type 1 subfamily. Homodimer.

The protein localises to the cytoplasm. It carries out the reaction tRNA(Pro) + L-proline + ATP = L-prolyl-tRNA(Pro) + AMP + diphosphate. In terms of biological role, catalyzes the attachment of proline to tRNA(Pro) in a two-step reaction: proline is first activated by ATP to form Pro-AMP and then transferred to the acceptor end of tRNA(Pro). As ProRS can inadvertently accommodate and process non-cognate amino acids such as alanine and cysteine, to avoid such errors it has two additional distinct editing activities against alanine. One activity is designated as 'pretransfer' editing and involves the tRNA(Pro)-independent hydrolysis of activated Ala-AMP. The other activity is designated 'posttransfer' editing and involves deacylation of mischarged Ala-tRNA(Pro). The misacylated Cys-tRNA(Pro) is not edited by ProRS. This Hamiltonella defensa subsp. Acyrthosiphon pisum (strain 5AT) protein is Proline--tRNA ligase.